We begin with the raw amino-acid sequence, 620 residues long: Chaperone protein HscA homolog (620 aa).

Belongs to the heat shock protein 70 family.

Its function is as follows. Chaperone involved in the maturation of iron-sulfur cluster-containing proteins. Has a low intrinsic ATPase activity which is markedly stimulated by HscB. The sequence is that of Chaperone protein HscA homolog from Shewanella woodyi (strain ATCC 51908 / MS32).